Reading from the N-terminus, the 82-residue chain is Cytochrome b559 subunit alpha (82 aa).

The helical transmembrane segment at 21 to 35 (VIHSITIPALFIAGW) threads the bilayer. Histidine 23 is a heme binding site.

This sequence belongs to the PsbE/PsbF family. Heterodimer of an alpha subunit and a beta subunit. PSII is composed of 1 copy each of membrane proteins PsbA, PsbB, PsbC, PsbD, PsbE, PsbF, PsbH, PsbI, PsbJ, PsbK, PsbL, PsbM, PsbT, PsbX, PsbY, PsbZ, Psb30/Ycf12, peripheral proteins PsbO, CyanoQ (PsbQ), PsbU, PsbV and a large number of cofactors. It forms dimeric complexes. Heme b is required as a cofactor.

It is found in the cellular thylakoid membrane. Its function is as follows. This b-type cytochrome is tightly associated with the reaction center of photosystem II (PSII). PSII is a light-driven water:plastoquinone oxidoreductase that uses light energy to abstract electrons from H(2)O, generating O(2) and a proton gradient subsequently used for ATP formation. It consists of a core antenna complex that captures photons, and an electron transfer chain that converts photonic excitation into a charge separation. In Nostoc sp. (strain PCC 7120 / SAG 25.82 / UTEX 2576), this protein is Cytochrome b559 subunit alpha.